We begin with the raw amino-acid sequence, 191 residues long: Ribosomal RNA small subunit methyltransferase G (191 aa).

Residues G62, F67, 111–112 (IE), and R124 each bind S-adenosyl-L-methionine.

This sequence belongs to the methyltransferase superfamily. RNA methyltransferase RsmG family.

It is found in the cytoplasm. The catalysed reaction is guanosine(527) in 16S rRNA + S-adenosyl-L-methionine = N(7)-methylguanosine(527) in 16S rRNA + S-adenosyl-L-homocysteine. In terms of biological role, specifically methylates the N7 position of guanine in position 527 of 16S rRNA. The polypeptide is Ribosomal RNA small subunit methyltransferase G (Rickettsia prowazekii (strain Madrid E)).